A 526-amino-acid polypeptide reads, in one-letter code: pH-sensitive chloride channel 2 (526 aa).

An N-terminal signal peptide occupies residues 1-18; it reads MDTLGIFVLISYLGLSSA. At 19 to 300 the chain is on the extracellular side; it reads AGVHLGDLQQ…VLLTREVGYY (282 aa). 8 N-linked (GlcNAc...) asparagine glycosylation sites follow: Asn33, Asn42, Asn52, Asn192, Asn231, Asn264, Asn271, and Asn283. A helical membrane pass occupies residues 301–321; the sequence is VIDYFLPSIMIVTISWVSFWL. Over 322 to 327 the chain is Cytoplasmic; the sequence is QADQTP. A helical membrane pass occupies residues 328 to 347; sequence ARTTLGCTTLLSFITLSLSQ. At 348-360 the chain is on the extracellular side; that stretch reads ENNLMKVSYVTMS. The chain crosses the membrane as a helical span at residues 361-381; it reads EVWFLVCTIFIFGSLVEFAFV. Residues 382-505 lie on the Cytoplasmic side of the membrane; that stretch reads NTIWRRNNDL…VSLWIDRKMR (124 aa). Positions 463–488 are disordered; the sequence is ISLDEQDETSTSESSDSSKEKPAQTF. The helical transmembrane segment at 506 to 526 threads the bilayer; that stretch reads FVFPLSFIVFNALFWTLVYCL.

It belongs to the ligand-gated ion channel (TC 1.A.9) family. As to expression, in third-instar larvae, expressed in the principal cells of the excretory Malpighian tubules (at protein level). Also detected in the enterocytes of the copper cell region and the iron cell region of the larval midgut (at protein level). In the copper cell region expression is confined to the interstitial cells and in the iron cell region it is expressed in the anterior portion (at protein level). Expressed in the Malpighian tubules and the middle midgut of third instar larvae and adults.

Its subcellular location is the apical cell membrane. The protein resides in the cell projection. It localises to the microvillus membrane. The protein localises to the late endosome membrane. It is found in the lysosome membrane. It carries out the reaction chloride(in) = chloride(out). In terms of biological role, ligand and pH-gated channel that mediates chloride transport primarily in the mid-gut and thereby functions in larval metabolism and fluid homeostasis. Channel opening is triggered by zinc binding or, to a lesser extent, an increase in extracellular pH. Zinc-dependent activity in the mid-gut is required for modulating Tor-dependent metabolic programs that promote larval feeding and systematic growth. It may therefore act as an intestinal zinc sensor that mediates larval growth and metabolism in response to micronutrient availability. Activates Tor signaling via its activity in maintaining lysosome homeostasis in interstitial cells and/or by its role in activating the release of insulin-like peptides in the brain after feeding, via an unknown mechanism. Functions in lysosome homeostasis by regulating chloride transport into enterocyte lysosomes to sustain V-ATPase function which maintains lysosomal acidification and consequently promotes Tor activation at the lysosome membrane. Also appears to play a role in regulating fluid secretion and osmotic homeostasis in Malpighian tubules in response to the pH of extracellular urine. This function is important for proper urine production during diuresis. In Drosophila melanogaster (Fruit fly), this protein is pH-sensitive chloride channel 2.